A 553-amino-acid polypeptide reads, in one-letter code: Glucose-6-phosphate isomerase (553 aa).

E357 serves as the catalytic Proton donor. Active-site residues include H388 and K514. A disordered region spans residues 524-553 (ITGAGSPPPQSDSSTDGLVRRYRTERGRAG). Basic and acidic residues predominate over residues 541-553 (LVRRYRTERGRAG).

This sequence belongs to the GPI family.

It is found in the cytoplasm. The enzyme catalyses alpha-D-glucose 6-phosphate = beta-D-fructose 6-phosphate. Its pathway is carbohydrate biosynthesis; gluconeogenesis. It functions in the pathway carbohydrate degradation; glycolysis; D-glyceraldehyde 3-phosphate and glycerone phosphate from D-glucose: step 2/4. In terms of biological role, catalyzes the reversible isomerization of glucose-6-phosphate to fructose-6-phosphate. The polypeptide is Glucose-6-phosphate isomerase (Mycobacterium bovis (strain BCG / Tokyo 172 / ATCC 35737 / TMC 1019)).